Reading from the N-terminus, the 358-residue chain is Probable protein phosphatase 2C 34 (358 aa).

The PPM-type phosphatase domain maps to 62 to 349; that stretch reads LASVFSRRGE…DDISAVCLFF (288 aa). 4 residues coordinate Mn(2+): aspartate 98, glycine 99, aspartate 294, and aspartate 340.

This sequence belongs to the PP2C family. Mg(2+) serves as cofactor. The cofactor is Mn(2+).

It catalyses the reaction O-phospho-L-seryl-[protein] + H2O = L-seryl-[protein] + phosphate. The catalysed reaction is O-phospho-L-threonyl-[protein] + H2O = L-threonyl-[protein] + phosphate. The chain is Probable protein phosphatase 2C 34 from Arabidopsis thaliana (Mouse-ear cress).